Consider the following 380-residue polypeptide: L-lactate dehydrogenase (380 aa).

The 380-residue stretch at 1–380 folds into the FMN hydroxy acid dehydrogenase domain; that stretch reads MIISSASDYR…DASILVKAVA (380 aa). Tyrosine 24 provides a ligand contact to substrate. FMN contacts are provided by serine 106 and glutamine 127. Tyrosine 129 provides a ligand contact to substrate. Threonine 155 serves as a coordination point for FMN. Arginine 164 is a substrate binding site. FMN is bound at residue lysine 251. Histidine 275 acts as the Proton acceptor in catalysis. Residue arginine 278 coordinates substrate. An FMN-binding site is contributed by 306-330; sequence DSGIRSGLDVVRMLALGAKGVLLGR.

Belongs to the FMN-dependent alpha-hydroxy acid dehydrogenase family. Homotetramer. FMN serves as cofactor.

It localises to the cell inner membrane. The catalysed reaction is (S)-lactate + A = pyruvate + AH2. Functionally, catalyzes the conversion of L-lactate to pyruvate. Is coupled to the respiratory chain. The polypeptide is L-lactate dehydrogenase (Pseudomonas syringae pv. syringae (strain B728a)).